Here is a 561-residue protein sequence, read N- to C-terminus: Type II methyltransferase M.BstVI (561 aa).

The protein belongs to the N(4)/N(6)-methyltransferase family.

It carries out the reaction a 2'-deoxyadenosine in DNA + S-adenosyl-L-methionine = an N(6)-methyl-2'-deoxyadenosine in DNA + S-adenosyl-L-homocysteine + H(+). In terms of biological role, a gamma subtype methylase, recognizes the double-stranded sequence 5'-CTCGAG-3', methylates A-5 on both strands, and protects the DNA from cleavage by the BstVI endonuclease. This chain is Type II methyltransferase M.BstVI, found in Geobacillus stearothermophilus (Bacillus stearothermophilus).